The primary structure comprises 264 residues: Acyl-[acyl-carrier-protein]--UDP-N-acetylglucosamine O-acyltransferase (264 aa).

It belongs to the transferase hexapeptide repeat family. LpxA subfamily. As to quaternary structure, homotrimer.

It is found in the cytoplasm. The enzyme catalyses a (3R)-hydroxyacyl-[ACP] + UDP-N-acetyl-alpha-D-glucosamine = a UDP-3-O-[(3R)-3-hydroxyacyl]-N-acetyl-alpha-D-glucosamine + holo-[ACP]. The protein operates within glycolipid biosynthesis; lipid IV(A) biosynthesis; lipid IV(A) from (3R)-3-hydroxytetradecanoyl-[acyl-carrier-protein] and UDP-N-acetyl-alpha-D-glucosamine: step 1/6. In terms of biological role, involved in the biosynthesis of lipid A, a phosphorylated glycolipid that anchors the lipopolysaccharide to the outer membrane of the cell. The sequence is that of Acyl-[acyl-carrier-protein]--UDP-N-acetylglucosamine O-acyltransferase from Albidiferax ferrireducens (strain ATCC BAA-621 / DSM 15236 / T118) (Rhodoferax ferrireducens).